The following is a 316-amino-acid chain: Ribosomal RNA small subunit methyltransferase H (316 aa).

S-adenosyl-L-methionine-binding positions include 35-37 (GGH), D55, F79, D101, and Q108.

Belongs to the methyltransferase superfamily. RsmH family.

The protein localises to the cytoplasm. The catalysed reaction is cytidine(1402) in 16S rRNA + S-adenosyl-L-methionine = N(4)-methylcytidine(1402) in 16S rRNA + S-adenosyl-L-homocysteine + H(+). Specifically methylates the N4 position of cytidine in position 1402 (C1402) of 16S rRNA. This chain is Ribosomal RNA small subunit methyltransferase H, found in Vibrio vulnificus (strain CMCP6).